The following is a 240-amino-acid chain: MSTLFIADLHLSVQEPAITAGFLHFIQREAIHADALYILGDLFESWIGDDDPEPLYRQVAAALKSLQQQGVPCYFIHGNRDFLLGKRFAEESGMVLLPEENVVELYGRKILILHGDTLCTDDTDYQHFRKKVHNPLIQKLFLWIPLRLRLRIAAYMRNKSQQNNSGKSEHIMDVNSKAVIDAFLRHDVSWMIHGHTHRPAIHSVELPMVTAHRVVLGAWHVEGSMVKVTADNVELITFPF.

Mn(2+) is bound by residues Asp8, His10, Asp41, Asn79, and His114. 79–80 (NR) serves as a coordination point for substrate. Residues Asp122, Ser160, Asn164, Lys167, and His195 each contribute to the substrate site. 2 residues coordinate Mn(2+): His195 and His197.

Belongs to the LpxH family. It depends on Mn(2+) as a cofactor.

The protein resides in the cell inner membrane. The enzyme catalyses UDP-2-N,3-O-bis[(3R)-3-hydroxytetradecanoyl]-alpha-D-glucosamine + H2O = 2-N,3-O-bis[(3R)-3-hydroxytetradecanoyl]-alpha-D-glucosaminyl 1-phosphate + UMP + 2 H(+). Its pathway is glycolipid biosynthesis; lipid IV(A) biosynthesis; lipid IV(A) from (3R)-3-hydroxytetradecanoyl-[acyl-carrier-protein] and UDP-N-acetyl-alpha-D-glucosamine: step 4/6. In terms of biological role, hydrolyzes the pyrophosphate bond of UDP-2,3-diacylglucosamine to yield 2,3-diacylglucosamine 1-phosphate (lipid X) and UMP by catalyzing the attack of water at the alpha-P atom. Involved in the biosynthesis of lipid A, a phosphorylated glycolipid that anchors the lipopolysaccharide to the outer membrane of the cell. This Yersinia pseudotuberculosis serotype O:1b (strain IP 31758) protein is UDP-2,3-diacylglucosamine hydrolase.